The primary structure comprises 289 residues: MWFQLKIEHCPNDKIEEITEELEECGALSITLTDKNDNPVLEPEPGTTPLWPEVIIHALFAQAEEAQYAREQLVAKRPSLHCSLELLADKNWERAWMDDFRPQRFGNRLWVCPTWLPPPEPDAVNLILDPGLAFGTGTHATTSLCLTWLEQADLKNKSIIDYGCGSGILSLAAIKLGAKHVYAVDIDNQALQATQSNAHANHITESQLSISFPEALQNPVHLVIANILLAPLISLKERFHQLLPSGAHLVTSGILEEQAPLLIDAYDSAFTHIATEYCEGWSLLVFTSK.

Residues Thr142, Gly163, Asp185, and Asn226 each coordinate S-adenosyl-L-methionine.

This sequence belongs to the methyltransferase superfamily. PrmA family.

It localises to the cytoplasm. The catalysed reaction is L-lysyl-[protein] + 3 S-adenosyl-L-methionine = N(6),N(6),N(6)-trimethyl-L-lysyl-[protein] + 3 S-adenosyl-L-homocysteine + 3 H(+). Its function is as follows. Methylates ribosomal protein L11. The polypeptide is Ribosomal protein L11 methyltransferase (Legionella pneumophila subsp. pneumophila (strain Philadelphia 1 / ATCC 33152 / DSM 7513)).